The following is a 206-amino-acid chain: Isochorismatase family protein 1A (206 aa).

It belongs to the isochorismatase family.

The protein is Isochorismatase family protein 1A of Dictyostelium discoideum (Social amoeba).